The sequence spans 295 residues: Translational activator of cytochrome c oxidase 1 (295 aa).

At K162 the chain carries N6-acetyllysine. Residues V190–K225 are a coiled coil.

Belongs to the TACO1 family.

The protein localises to the mitochondrion. In terms of biological role, acts as a translational activator of mitochondrially-encoded cytochrome c oxidase 1. The protein is Translational activator of cytochrome c oxidase 1 of Rattus norvegicus (Rat).